Consider the following 509-residue polypeptide: Zinc finger CCCH-type with G patch domain-containing protein (509 aa).

The segment at proline 155 to leucine 178 adopts a C3H1-type zinc-finger fold. A disordered region spans residues glutamate 253–aspartate 277. The region spanning threonine 310–glutamate 356 is the G-patch domain. The tract at residues glycine 409 to glutamine 430 is disordered. Residues glutamate 411–alanine 420 are compositionally biased toward basic and acidic residues.

It localises to the nucleus. Its function is as follows. Transcription repressor. This Drosophila persimilis (Fruit fly) protein is Zinc finger CCCH-type with G patch domain-containing protein.